We begin with the raw amino-acid sequence, 345 residues long: MTDKTSLSYKDAGVDIDAGNALVGRIKGVVKKTRRPEVMGGLGGFGALCALPQKYREPVLVSGTDGVGTKLRLAMDLKRHDTIGIDLVAMCVNDLVVQGAEPLFFLDYYATGKLDVDTASAVISGIAEGCLQSGCSLVGGETAEMPGMYHGEDYDVAGFCVGVVEKSEIIDGSKVSDGDVLIALGSSGPHSNGYSLVRKILEVSGCDPQTTELDGKPLADHLLAPTRIYVKSVLKLIEKVDVHAIAHLTGGGFWENIPRVLPDNTQAVIDESSWQWPEVFNWLQTAGNVERHEMYRTFNCGVGMIIALPAPEVDKALALLNANGENAWKIGIIKASDSEQRVVIE.

This sequence belongs to the AIR synthase family.

The protein resides in the cytoplasm. The enzyme catalyses 2-formamido-N(1)-(5-O-phospho-beta-D-ribosyl)acetamidine + ATP = 5-amino-1-(5-phospho-beta-D-ribosyl)imidazole + ADP + phosphate + H(+). It functions in the pathway purine metabolism; IMP biosynthesis via de novo pathway; 5-amino-1-(5-phospho-D-ribosyl)imidazole from N(2)-formyl-N(1)-(5-phospho-D-ribosyl)glycinamide: step 2/2. This is Phosphoribosylformylglycinamidine cyclo-ligase from Escherichia coli O6:K15:H31 (strain 536 / UPEC).